The following is a 778-amino-acid chain: Acyl-homoserine lactone acylase PvdQ (778 aa).

A signal peptide spans 1–25; the sequence is MTISRQFTGLTLAGLFLGLSLSAQA. Positions 196-218 are cleaved as a propeptide — spacer peptide; that stretch reads IENNARAYQLADTRLQRFALDRG. Ser219 acts as the Nucleophile in catalysis.

The protein belongs to the peptidase S45 family. Heterodimer of an alpha subunit and a beta subunit processed from the same precursor.

The protein localises to the periplasm. The enzyme catalyses an N-acyl-L-homoserine lactone + H2O = L-homoserine lactone + a carboxylate. In terms of biological role, catalyzes the deacylation of acyl-homoserine lactone (AHL or acyl-HSL), releasing homoserine lactone (HSL) and the corresponding fatty acid. Possesses a specificity for the degradation of long-chain acyl-HSLs (side chains of 11 to 14 carbons in length). The protein is Acyl-homoserine lactone acylase PvdQ (pvdQ) of Pseudomonas fluorescens (strain Pf0-1).